Here is a 412-residue protein sequence, read N- to C-terminus: Multifunctional CCA protein (412 aa).

Residues G8 and R11 each coordinate ATP. CTP-binding residues include G8 and R11. Residues D21 and D23 each contribute to the Mg(2+) site. ATP-binding residues include R91, R137, and R140. Positions 91, 137, and 140 each coordinate CTP. An HD domain is found at 228–329 (TGIHTLMTLS…VKLFDSIDAW (102 aa)).

It belongs to the tRNA nucleotidyltransferase/poly(A) polymerase family. Bacterial CCA-adding enzyme type 1 subfamily. Monomer. Can also form homodimers and oligomers. The cofactor is Mg(2+). Ni(2+) is required as a cofactor.

The enzyme catalyses a tRNA precursor + 2 CTP + ATP = a tRNA with a 3' CCA end + 3 diphosphate. It catalyses the reaction a tRNA with a 3' CCA end + 2 CTP + ATP = a tRNA with a 3' CCACCA end + 3 diphosphate. Its function is as follows. Catalyzes the addition and repair of the essential 3'-terminal CCA sequence in tRNAs without using a nucleic acid template. Adds these three nucleotides in the order of C, C, and A to the tRNA nucleotide-73, using CTP and ATP as substrates and producing inorganic pyrophosphate. tRNA 3'-terminal CCA addition is required both for tRNA processing and repair. Also involved in tRNA surveillance by mediating tandem CCA addition to generate a CCACCA at the 3' terminus of unstable tRNAs. While stable tRNAs receive only 3'-terminal CCA, unstable tRNAs are marked with CCACCA and rapidly degraded. This chain is Multifunctional CCA protein, found in Escherichia coli O127:H6 (strain E2348/69 / EPEC).